Reading from the N-terminus, the 98-residue chain is Small ribosomal subunit protein bS6 (98 aa).

This sequence belongs to the bacterial ribosomal protein bS6 family.

Binds together with bS18 to 16S ribosomal RNA. This chain is Small ribosomal subunit protein bS6, found in Lactobacillus helveticus (strain DPC 4571).